We begin with the raw amino-acid sequence, 163 residues long: NADH-quinone oxidoreductase subunit I (163 aa).

4Fe-4S ferredoxin-type domains follow at residues 53–83 and 94–123; these read LRRYPNGEERCIACKLCEAVCPALAITIEAG and TLYEIDMFKCIYCGFCEESCPVDSIVETRE. [4Fe-4S] cluster-binding residues include Cys-63, Cys-66, Cys-69, Cys-73, Cys-103, Cys-106, Cys-109, and Cys-113.

The protein belongs to the complex I 23 kDa subunit family. In terms of assembly, NDH-1 is composed of 14 different subunits. Subunits NuoA, H, J, K, L, M, N constitute the membrane sector of the complex. [4Fe-4S] cluster serves as cofactor.

The protein localises to the cell inner membrane. The enzyme catalyses a quinone + NADH + 5 H(+)(in) = a quinol + NAD(+) + 4 H(+)(out). In terms of biological role, NDH-1 shuttles electrons from NADH, via FMN and iron-sulfur (Fe-S) centers, to quinones in the respiratory chain. The immediate electron acceptor for the enzyme in this species is believed to be ubiquinone. Couples the redox reaction to proton translocation (for every two electrons transferred, four hydrogen ions are translocated across the cytoplasmic membrane), and thus conserves the redox energy in a proton gradient. The protein is NADH-quinone oxidoreductase subunit I of Alkalilimnicola ehrlichii (strain ATCC BAA-1101 / DSM 17681 / MLHE-1).